A 455-amino-acid chain; its full sequence is Argininosuccinate lyase (455 aa).

The protein belongs to the lyase 1 family. Argininosuccinate lyase subfamily.

It localises to the cytoplasm. The enzyme catalyses 2-(N(omega)-L-arginino)succinate = fumarate + L-arginine. Its pathway is amino-acid biosynthesis; L-arginine biosynthesis; L-arginine from L-ornithine and carbamoyl phosphate: step 3/3. This Shewanella sp. (strain MR-7) protein is Argininosuccinate lyase.